We begin with the raw amino-acid sequence, 261 residues long: Sulfur carrier protein FdhD (261 aa).

Cys105 serves as the catalytic Cysteine persulfide intermediate. 245-250 (FIRGDR) is a binding site for Mo-bis(molybdopterin guanine dinucleotide).

This sequence belongs to the FdhD family.

The protein resides in the cytoplasm. In terms of biological role, required for formate dehydrogenase (FDH) activity. Acts as a sulfur carrier protein that transfers sulfur from IscS to the molybdenum cofactor prior to its insertion into FDH. The sequence is that of Sulfur carrier protein FdhD from Listeria monocytogenes serovar 1/2a (strain ATCC BAA-679 / EGD-e).